Reading from the N-terminus, the 431-residue chain is 3-phosphoshikimate 1-carboxyvinyltransferase (431 aa).

Positions 20, 21, and 25 each coordinate 3-phosphoshikimate. Lys-20 contributes to the phosphoenolpyruvate binding site. Phosphoenolpyruvate contacts are provided by Gly-91 and Arg-119. Positions 164, 166, 317, and 344 each coordinate 3-phosphoshikimate. Gln-166 serves as a coordination point for phosphoenolpyruvate. Asp-317 serves as the catalytic Proton acceptor. Phosphoenolpyruvate contacts are provided by Arg-348 and Arg-390.

It belongs to the EPSP synthase family. In terms of assembly, monomer.

Its subcellular location is the cytoplasm. It catalyses the reaction 3-phosphoshikimate + phosphoenolpyruvate = 5-O-(1-carboxyvinyl)-3-phosphoshikimate + phosphate. Its pathway is metabolic intermediate biosynthesis; chorismate biosynthesis; chorismate from D-erythrose 4-phosphate and phosphoenolpyruvate: step 6/7. Functionally, catalyzes the transfer of the enolpyruvyl moiety of phosphoenolpyruvate (PEP) to the 5-hydroxyl of shikimate-3-phosphate (S3P) to produce enolpyruvyl shikimate-3-phosphate and inorganic phosphate. This chain is 3-phosphoshikimate 1-carboxyvinyltransferase, found in Aquifex aeolicus (strain VF5).